Reading from the N-terminus, the 131-residue chain is uncharacterized protein (131 aa).

4 helical membrane passes run 7–29 (LLKF…SLLY), 49–69 (LVKV…LIAL), 76–98 (LILI…LFTY), and 102–124 (ELSE…FLYL).

It is found in the cell membrane. This is an uncharacterized protein from Aquifex aeolicus (strain VF5).